The following is a 230-amino-acid chain: Ion-translocating oxidoreductase complex subunit E (230 aa).

The next 5 helical transmembrane spans lie at 22–42 (LLGL…LGLG), 63–83 (TPAE…VSAV), 86–106 (LINA…PLIV), 125–145 (WLSA…MFVL), and 182–202 (PFLL…MLAV).

Belongs to the NqrDE/RnfAE family. The complex is composed of six subunits: RsxA, RsxB, RsxC, RsxD, RsxE and RsxG.

It localises to the cell inner membrane. In terms of biological role, part of a membrane-bound complex that couples electron transfer with translocation of ions across the membrane. Required to maintain the reduced state of SoxR. This chain is Ion-translocating oxidoreductase complex subunit E, found in Salmonella paratyphi A (strain ATCC 9150 / SARB42).